A 136-amino-acid chain; its full sequence is ATP synthase epsilon chain (136 aa).

The segment at 106 to 136 (MEGQPSSPEKLKAQQQLNEARARLQASKTAD) is disordered.

It belongs to the ATPase epsilon chain family. In terms of assembly, F-type ATPases have 2 components, CF(1) - the catalytic core - and CF(0) - the membrane proton channel. CF(1) has five subunits: alpha(3), beta(3), gamma(1), delta(1), epsilon(1). CF(0) has three main subunits: a, b and c.

The protein resides in the cellular thylakoid membrane. In terms of biological role, produces ATP from ADP in the presence of a proton gradient across the membrane. In Synechococcus sp. (strain CC9605), this protein is ATP synthase epsilon chain.